We begin with the raw amino-acid sequence, 353 residues long: 2-Hydroxyacid oxidase 2 (353 aa).

Residues 2-353 (PLVCLADFKA…SPDLIQFSRL (352 aa)) enclose the FMN hydroxy acid dehydrogenase domain. FMN is bound by residues 77–79 (PTA), S106, and Q128. Y130 lines the a 2-oxocarboxylate pocket. S133 is subject to Phosphoserine. T156 is a binding site for FMN. R165 contacts a 2-oxocarboxylate. K224 contacts FMN. The active-site Proton acceptor is H248. Residue R251 participates in a 2-oxocarboxylate binding. FMN-binding positions include 279–283 (DGGVR) and 302–303 (GR). The Microbody targeting signal signature appears at 351–353 (SRL).

Belongs to the FMN-dependent alpha-hydroxy acid dehydrogenase family. In terms of assembly, homotetramer. Could also form homooctamer. Requires FMN as cofactor. Expressed in kidney.

Its subcellular location is the peroxisome. It catalyses the reaction a (2S)-2-hydroxycarboxylate + O2 = a 2-oxocarboxylate + H2O2. It carries out the reaction 2-hydroxyoctanoate + O2 = 2-oxooctanoate + H2O2. The enzyme catalyses 2-hydroxyhexadecanoate + O2 = 2-oxohexadecanoate + H2O2. The catalysed reaction is 2-hydroxyhexanoate + O2 = 2-oxohexanoate + H2O2. It catalyses the reaction mandelate + O2 = phenylglyoxylate + H2O2. Is inhibited in vitro by CCPST (4-carboxy-5-(4-chlorophenyl)sulfanyl-1,2,3-thiadiazole). Oxidase that catalyzes the oxidation of medium and long chain hydroxyacids such as 2-hydroxyhexadecanoate, 2-hydroxyoctanoate, 2-hydroxyhexanoate and 2-hydroxybutanoate, to the correspondong 2-oxoacids. Its role in the oxidation of 2-hydroxy fatty acids may contribute to the general pathway of fatty acid alpha-oxidation. Can also use mandelate as substrate. Active in vitro with the artificial electron acceptor 2,6-dichlorophenolindophenol (DCIP), but O2 is believed to be the physiological electron acceptor, leading to the production of H2O2. This chain is 2-Hydroxyacid oxidase 2 (Hao2), found in Rattus norvegicus (Rat).